Consider the following 244-residue polypeptide: Type III pantothenate kinase (244 aa).

An ATP-binding site is contributed by 12–19; it reads VVGNTHVR. Substrate is bound by residues Tyr79 and 83 to 86; that span reads GLDR. Catalysis depends on Asp85, which acts as the Proton acceptor. Asp105 contacts K(+). Thr108 is an ATP binding site. Thr163 lines the substrate pocket.

This sequence belongs to the type III pantothenate kinase family. As to quaternary structure, homodimer. It depends on NH4(+) as a cofactor. Requires K(+) as cofactor.

It localises to the cytoplasm. The catalysed reaction is (R)-pantothenate + ATP = (R)-4'-phosphopantothenate + ADP + H(+). Its pathway is cofactor biosynthesis; coenzyme A biosynthesis; CoA from (R)-pantothenate: step 1/5. Functionally, catalyzes the phosphorylation of pantothenate (Pan), the first step in CoA biosynthesis. This Synechococcus sp. (strain JA-3-3Ab) (Cyanobacteria bacterium Yellowstone A-Prime) protein is Type III pantothenate kinase.